Consider the following 43-residue polypeptide: Protein PsbN (43 aa).

The helical transmembrane segment at 7-27 (VAIFISGLLVSFTGYALYTAF) threads the bilayer.

The protein belongs to the PsbN family.

The protein resides in the plastid. It localises to the chloroplast thylakoid membrane. In terms of biological role, may play a role in photosystem I and II biogenesis. This is Protein PsbN from Daucus carota (Wild carrot).